The following is a 699-amino-acid chain: Triacylglycerol hydrolase DDHD2 (699 aa).

Residues methionine 1–leucine 11 show a composition bias toward polar residues. Positions methionine 1–serine 25 are disordered. Over residues serine 12–serine 25 the composition is skewed to low complexity. The WWE domain maps to aspartate 30–arginine 112. Serine 351 serves as the catalytic Nucleophile. An SAM domain is found at aspartate 383–lysine 445. Serine 447 is subject to Phosphoserine. The region spanning leucine 484–glutamine 688 is the DDHD domain. Residues glutamine 599–proline 635 are disordered. Over residues threonine 603 to serine 613 the composition is skewed to acidic residues.

This sequence belongs to the PA-PLA1 family. In terms of assembly, forms homooligomers and, to a much smaller extent, heterooligomers with DDHD1.

It localises to the cytoplasm. The protein localises to the cytosol. It is found in the endoplasmic reticulum-Golgi intermediate compartment. The protein resides in the golgi apparatus. Its subcellular location is the cis-Golgi network. It carries out the reaction a triacylglycerol + H2O = a diacylglycerol + a fatty acid + H(+). The enzyme catalyses a diacylglycerol + H2O = a monoacylglycerol + a fatty acid + H(+). It catalyses the reaction a 1,3-diacylglycerol + H2O = a 1-acylglycerol + a fatty acid + H(+). The catalysed reaction is a 1-acylglycerol + H2O = glycerol + a fatty acid + H(+). It carries out the reaction 1,2,3-tri-(9Z-octadecenoyl)-glycerol + H2O = di-(9Z)-octadecenoylglycerol + (9Z)-octadecenoate + H(+). The enzyme catalyses di-(9Z)-octadecenoylglycerol + H2O = (9Z-octadecenoyl)-glycerol + (9Z)-octadecenoate + H(+). It catalyses the reaction 1,3-di-(9Z-octadecenoyl)-glycerol + H2O = 1-(9Z-octadecenoyl)-glycerol + (9Z)-octadecenoate + H(+). The catalysed reaction is trihexadecanoylglycerol + H2O = dihexadecanoylglycerol + hexadecanoate + H(+). It carries out the reaction 1,2-di-(9Z-octadecenoyl)-sn-glycero-3-phosphocholine + H2O = (9Z-octadecenoyl)-sn-glycero-3-phosphocholine + (9Z)-octadecenoate + H(+). The enzyme catalyses 1-(9Z-octadecenoyl)-glycerol + H2O = glycerol + (9Z)-octadecenoate + H(+). It catalyses the reaction 1,2-di-(9Z-octadecenoyl)-sn-glycero-3-phosphate + H2O = 2-(9Z-octadecenoyl)-sn-glycero-3-phosphate + (9Z)-octadecenoate + H(+). The catalysed reaction is 1-hexadecanoyl-2-(9Z-octadecenoyl)-sn-glycero-3-phosphate + H2O = 2-(9Z-octadecenoyl)-sn-glycero-3-phosphate + hexadecanoate + H(+). It carries out the reaction 1-hexadecanoyl-2-(9Z-octadecenoyl)-sn-glycero-3-phosphoethanolamine + H2O = 2-(9Z-octadecenoyl)-sn-glycero-3-phosphoethanolamine + hexadecanoate + H(+). The enzyme catalyses 1-hexadecanoyl-2-(9Z-octadecenoyl)-sn-glycero-3-phospho-L-serine + H2O = 2-(9Z-octadecenoyl)-sn-glycero-3-phospho-L-serine + hexadecanoate + H(+). It catalyses the reaction 1-hexadecanoyl-2-(9Z-octadecenoyl)-sn-glycero-3-phosphocholine + H2O = 2-(9Z-octadecenoyl)-sn-glycero-3-phosphocholine + hexadecanoate + H(+). In terms of biological role, diacylglycerol (DAG) and triacylglycerol (TAG) lipase that is required for proper lipid homeostasis in the central nervous system. It cooperates with PNPLA2/ATGL in neuronal TAG catabolism and hydrolyzes sn-1,3-DAG downstream of PNPLA2/ATGL. In vitro, also acts as a phospholipase that hydrolyzes preferentially phosphatidic acids, including 1,2-dioleoyl-sn-phosphatidic acid, phosphatidylcholine and phosphatidylethanolamine. Specifically binds to phosphatidylinositol 3-phosphate (PI(3)P), phosphatidylinositol 4-phosphate (PI(4)P), phosphatidylinositol 5-phosphate (PI(5)P) and possibly phosphatidylinositol 4,5-bisphosphate (PI(4,5)P2). May be involved in the maintenance of the endoplasmic reticulum and/or Golgi structures. May regulate the transport between Golgi apparatus and plasma membrane. The protein is Triacylglycerol hydrolase DDHD2 of Mus musculus (Mouse).